We begin with the raw amino-acid sequence, 369 residues long: Transmembrane protein adipocyte-associated 1 (369 aa).

Asn20 carries an N-linked (GlcNAc...) asparagine glycan. Helical transmembrane passes span 45 to 65 (LLLL…LPLA), 73 to 93 (SSPI…VGIA), 120 to 140 (FFLL…GHLE), 148 to 168 (VLAI…TLEI), 189 to 209 (QFWL…VILP), 237 to 257 (LLQG…LCCV), and 262 to 282 (FLYF…GFFG). Asn329 carries an N-linked (GlcNAc...) asparagine glycan.

It belongs to the UPF0359 family. As to expression, ubiquitous, with higher levels in heart, brain, lung, liver and kidney.

It localises to the membrane. This Mus musculus (Mouse) protein is Transmembrane protein adipocyte-associated 1 (Tpra1).